Here is a 71-residue protein sequence, read N- to C-terminus: Conotoxin TxMMSK-05 (71 aa).

The signal sequence occupies residues 1 to 20 (MMSKLGALLIICLLLFPLTA). Positions 21 to 52 (VPLDGDQHADRPAERLQDDISSKHHPMFDAVR) are excised as a propeptide. 3 disulfides stabilise this stretch: Cys54–Cys70, Cys55–Cys66, and Cys60–Cys69.

This sequence belongs to the conotoxin M superfamily. As to expression, expressed by the venom duct.

The protein localises to the secreted. In Conus textile (Cloth-of-gold cone), this protein is Conotoxin TxMMSK-05.